Reading from the N-terminus, the 322-residue chain is Undecaprenyl-phosphate 4-deoxy-4-formamido-L-arabinose transferase (322 aa).

Topologically, residues 1–235 (MFEIHPVKKV…TCLTTTPLRM (235 aa)) are cytoplasmic. The helical transmembrane segment at 236–256 (LSLLGSIIAIGGFSIAVLLVI) threads the bilayer. Residues 257-269 (LRLTFGPQWAAEG) lie on the Periplasmic side of the membrane. Residues 270–290 (VFMLFAVLFTFIGAQFIGMGL) form a helical membrane-spanning segment. Over 291–322 (LGEYIGRIYTDVRARPRYFVQQVIRPSSKENE) the chain is Cytoplasmic.

Belongs to the glycosyltransferase 2 family.

Its subcellular location is the cell inner membrane. It carries out the reaction UDP-4-deoxy-4-formamido-beta-L-arabinose + di-trans,octa-cis-undecaprenyl phosphate = 4-deoxy-4-formamido-alpha-L-arabinopyranosyl di-trans,octa-cis-undecaprenyl phosphate + UDP. It functions in the pathway glycolipid biosynthesis; 4-amino-4-deoxy-alpha-L-arabinose undecaprenyl phosphate biosynthesis; 4-amino-4-deoxy-alpha-L-arabinose undecaprenyl phosphate from UDP-4-deoxy-4-formamido-beta-L-arabinose and undecaprenyl phosphate: step 1/2. It participates in bacterial outer membrane biogenesis; lipopolysaccharide biosynthesis. Functionally, catalyzes the transfer of 4-deoxy-4-formamido-L-arabinose from UDP to undecaprenyl phosphate. The modified arabinose is attached to lipid A and is required for resistance to polymyxin and cationic antimicrobial peptides. This chain is Undecaprenyl-phosphate 4-deoxy-4-formamido-L-arabinose transferase, found in Escherichia coli O157:H7 (strain EC4115 / EHEC).